We begin with the raw amino-acid sequence, 159 residues long: 2-C-methyl-D-erythritol 2,4-cyclodiphosphate synthase (159 aa).

Residues Asp-8 and His-10 each contribute to the a divalent metal cation site. 4-CDP-2-C-methyl-D-erythritol 2-phosphate contacts are provided by residues 8–10 and 34–35; these read DVH and HS. Residue His-42 participates in a divalent metal cation binding. 4-CDP-2-C-methyl-D-erythritol 2-phosphate-binding positions include 56 to 58, 61 to 65, 100 to 106, 132 to 135, Phe-139, and Arg-142; these read DIG, FPDTD, AQAPKML, and TTTE.

It belongs to the IspF family. In terms of assembly, homotrimer. A divalent metal cation serves as cofactor.

The catalysed reaction is 4-CDP-2-C-methyl-D-erythritol 2-phosphate = 2-C-methyl-D-erythritol 2,4-cyclic diphosphate + CMP. It functions in the pathway isoprenoid biosynthesis; isopentenyl diphosphate biosynthesis via DXP pathway; isopentenyl diphosphate from 1-deoxy-D-xylulose 5-phosphate: step 4/6. In terms of biological role, involved in the biosynthesis of isopentenyl diphosphate (IPP) and dimethylallyl diphosphate (DMAPP), two major building blocks of isoprenoid compounds. Catalyzes the conversion of 4-diphosphocytidyl-2-C-methyl-D-erythritol 2-phosphate (CDP-ME2P) to 2-C-methyl-D-erythritol 2,4-cyclodiphosphate (ME-CPP) with a corresponding release of cytidine 5-monophosphate (CMP). This is 2-C-methyl-D-erythritol 2,4-cyclodiphosphate synthase from Escherichia coli O127:H6 (strain E2348/69 / EPEC).